The primary structure comprises 157 residues: Small ribosomal subunit protein uS7cz/uS7cy (157 aa).

It belongs to the universal ribosomal protein uS7 family. In terms of assembly, part of the 30S ribosomal subunit.

The protein localises to the plastid. It localises to the chloroplast. Its function is as follows. One of the primary rRNA binding proteins, it binds directly to 16S rRNA where it nucleates assembly of the head domain of the 30S subunit. This Welwitschia mirabilis (Tree tumbo) protein is Small ribosomal subunit protein uS7cz/uS7cy (rps7-A).